The sequence spans 142 residues: Hemoglobin subunit alpha-1 (142 aa).

Residues 2–142 form the Globin domain; sequence VLSPADKTNI…VSTVLTSKYR (141 aa). His59 contributes to the O2 binding site. His88 provides a ligand contact to heme b.

This sequence belongs to the globin family. Heterotetramer of two alpha chains and two beta chains. In terms of tissue distribution, red blood cells.

Involved in oxygen transport from the lung to the various peripheral tissues. In Arctocephalus galapagoensis (Galapagoes fur seal), this protein is Hemoglobin subunit alpha-1.